We begin with the raw amino-acid sequence, 496 residues long: Lysine--tRNA ligase (496 aa).

2 residues coordinate Mg(2+): Glu409 and Glu416.

Belongs to the class-II aminoacyl-tRNA synthetase family. Homodimer. It depends on Mg(2+) as a cofactor.

It is found in the cytoplasm. The catalysed reaction is tRNA(Lys) + L-lysine + ATP = L-lysyl-tRNA(Lys) + AMP + diphosphate. In Streptococcus gordonii (strain Challis / ATCC 35105 / BCRC 15272 / CH1 / DL1 / V288), this protein is Lysine--tRNA ligase.